The following is a 589-amino-acid chain: Growth factor receptor-bound protein 10 (589 aa).

Disordered regions lie at residues 1–51 and 77–107; these read MALA…EDDV and LHNG…VPRS. Ser-99 is modified (phosphoserine). At Ser-145 the chain carries Phosphoserine; by MTOR, MAPK1 and MAPK3. Residues 161 to 245 enclose the Ras-associating domain; sequence AKQDVKVFSE…SKFLFRKNYA (85 aa). Residues 285–394 form the PH domain; it reads CPEIQGFLHV…WMTAFRLLKY (110 aa). Ser-413 bears the Phosphoserine; by MAPK1 and MAPK3; in vitro mark. A Phosphoserine; by MTOR and PKB/AKT1 modification is found at Ser-423. Ser-426 is subject to Phosphoserine. Phosphoserine; by MTOR, MAPK1 and MAPK3 is present on Ser-471. Residues 488 to 584 form the SH2 domain; the sequence is WFHGRISREE…VLPCKLKHHC (97 aa).

The protein belongs to the GRB7/10/14 family. In terms of assembly, interacts with ligand-activated tyrosine kinase receptors, including FGFR1, INSR, IGF1R, MET and PDGFRB in a phosphotyrosine-dependent manner through the SH2 domain. Poorly binds to the EGFR. Directly interacts with MAP3K14/NIK and is recruited to the EGFR-ERBB2 complex. Interacts with GIGYF1/PERQ1 and GIGYF2/TNRC15. When unphosphorylated, interacts with AKT1 and when phosphorylated with YWHAE/14-3-3 epsilon. Interacts with NEDD4. Interacts with LRP6, thus interfering with the binding of AXIN1 to LRP6. Binds relatively non-specifically to several phosphoinositides, including PI(5)P, PI(4,5)P2, PI(3,4)P2 and PI(3,4,5)P3, with modest affinities through the PH domain. Binds to activated NRAS. Phosphorylated on serine residues upon EGF, FGF and PDGF stimulation.

The protein resides in the cytoplasm. Its activity is regulated as follows. Phosphorylation by mTORC1 stabilizes and activates GRB10 constituting a feedback pathway by which mTORC1 inhibits INSR-dependent signaling. Its function is as follows. Adapter protein which modulates coupling of a number of cell surface receptor kinases with specific signaling pathways. Binds to, and suppress signals from, activated receptors tyrosine kinases, including the insulin (INSR) and insulin-like growth factor (IGF1R) receptors. The inhibitory effect can be achieved by 2 mechanisms: interference with the signaling pathway and increased receptor degradation. Delays and reduces AKT1 phosphorylation in response to insulin stimulation. Blocks association between INSR and IRS1 and IRS2 and prevents insulin-stimulated IRS1 and IRS2 tyrosine phosphorylation. Recruits NEDD4 to IGF1R, leading to IGF1R ubiquitination, increased internalization and degradation by both the proteasomal and lysosomal pathways. A similar role in the mediation of ubiquitination also has been suggested with INSR. Negatively regulates Wnt signaling by interacting with LRP6 intracellular portion and interfering with the binding of AXIN1 to LRP6. Positive regulator of the KDR/VEGFR-2 signaling pathway. May inhibit NEDD4-mediated degradation of KDR/VEGFR-2. The sequence is that of Growth factor receptor-bound protein 10 (Grb10) from Sus scrofa (Pig).